The following is a 586-amino-acid chain: MKYILVTGGVISGIGKGIIASSIGTILKSCGLRVTAIKIDPYINIDAGTFSPYEHGEVFVLNDGGEVDLDLGNYERFLDINLYKDNNITTGKIYQHVINKERRGDYLGKTVQVVPHITDAIQEWVMNQAKVSVDGNKEDPQICVIELGGTIGDIEGMAFVEAFRQFQFKAKKENFYNIHVSLVPQPSATGEQKTKPTQNSVRALRGLGLSPDLIVCRSSTPIEMAVKEKISMFCHVNPEQVICIHDVSSIYRVPLLLEEQGVVKYFQERLGLPINDCSSNLLFKWKAMADRYERLQKICSIALVGKYTKLRDCYASVFKALEHSALAINHKLNLMYIDSIDLEPVTKAEDPVKFHEAWQKLCLADGILVPGGFGIRGTLGKLQAISWARTKKIPFLGICLGMQLAVIEFARNCLNLKDANSTEFEPNTPVPLVIDMPEHNPGDLGGTMRLGLRRTVFTTENSILKKLYGDVPYIEERHRHRYEVNPNLINQFENKDLCFVGEDVDGKRMEIVELTSHPYFIGVQFHPEFSSRPMKPSPPYLGLLLAATGNLNAHLQQMNKLPYSDGYSDASDDSFPEAKLAELDLN.

The 255-residue stretch at 300–554 (SIALVGKYTK…LAATGNLNAH (255 aa)) folds into the Glutamine amidotransferase type-1 domain. Catalysis depends on for GATase activity residues cysteine 399, histidine 526, and glutamate 528. A phosphoserine mark is found at serine 568, serine 571, and serine 574.

This sequence belongs to the CTP synthase family.

It catalyses the reaction UTP + L-glutamine + ATP + H2O = CTP + L-glutamate + ADP + phosphate + 2 H(+). It functions in the pathway pyrimidine metabolism; CTP biosynthesis via de novo pathway; CTP from UDP: step 2/2. Catalyzes the ATP-dependent amination of UTP to CTP with either L-glutamine or ammonia as the source of nitrogen. Constitutes the rate-limiting enzyme in the synthesis of cytosine nucleotides. This chain is CTP synthase 2 (Ctps2), found in Mus musculus (Mouse).